A 139-amino-acid chain; its full sequence is Single-stranded DNA-binding protein 2 (139 aa).

The region spanning methionine 1–glutamate 104 is the SSB domain. Positions leucine 103 to phenylalanine 139 are disordered. Low complexity predominate over residues lysine 106 to asparagine 125. The span at asparagine 129 to phenylalanine 139 shows a compositional bias: acidic residues.

As to quaternary structure, homotetramer.

In Staphylococcus aureus (strain COL), this protein is Single-stranded DNA-binding protein 2 (ssb-p).